The following is a 948-amino-acid chain: ELKS/Rab6-interacting/CAST family member 1 (948 aa).

The disordered stretch occupies residues 1 to 54; sequence MYGSARSVGKVEPSSQSPGRSPRLPRSPRLGHRRTNSTGGSSGNSVGGGSGKTL. N6-acetyllysine is present on Lys-10. Low complexity predominate over residues 13–28; sequence PSSQSPGRSPRLPRSP. 3 positions are modified to phosphoserine: Ser-17, Ser-21, and Ser-37. Thr-38 carries the post-translational modification Phosphothreonine. A compositionally biased stretch (gly residues) spans 40–51; the sequence is GSSGNSVGGGSG. Ser-55, Ser-75, Ser-94, Ser-796, and Ser-937 each carry phosphoserine. Positions 144 to 920 form a coiled coil; it reads RQARDNTIMD…RMKLMADNYE (777 aa). Over residues 773-796 the composition is skewed to basic and acidic residues; it reads KHKEQVEKKKSAQMLEEARRREDS. Disordered regions lie at residues 773–801 and 903–948; these read KHKE…SDSS and QLKQ…GIWA. The segment covering 939–948 has biased composition (acidic residues); the sequence is DQDEEEGIWA.

Interacts with the GTB-bound forms of RAB6A isoform 1 and isoform 2 and with RAB6B. The interaction was strongest with RAB6B, followed by RAB6A isoform 2 and weakest with RAB6A isoform 1. Part of a complex with CHUK, IKBKB and IKBKG. Interacts with CHUK, IKBKB and IKBKG. The interaction with IKBKG is independent of CHUK and IKBKB. Interacts with NFKBIA. Isoform 1 interacts through its C-terminus with the PDZ domains of RIMS1 and RIMS2. Interacts with ERC2/CAST1. Interacts with SDCCAG8. Part of a cortical microtubule stabilization complex (CMSC) composed of KANK1, PPFIA1, PPFIBP1, ERC1/ELKS, PHLDB2/LL5beta, CLASPs, KIF21A and possibly additional interactors; within CMSCs KANK1 and PHLDB2/LL5beta appear to be the core components for targeting of microtubule-binding proteins KIF21A and CLASPs, whereas PPFIA1, PPFIBP1 and ERC1/ELKS serve as scaffolds for protein clustering. As to expression, isoform 1 is specifically expressed in brain. A further probable isoform is widely expressed outside of brain It is referred to as ERC1a by PubMed:12391317 and characterized by a C-terminus identical to that of isoforms 1 in human and mouse.

Its subcellular location is the cytoplasm. The protein localises to the cytoskeleton. The protein resides in the microtubule organizing center. It is found in the centrosome. It localises to the membrane. Its subcellular location is the golgi apparatus membrane. The protein localises to the presynaptic active zone. The protein resides in the cell projection. It is found in the podosome. Regulatory subunit of the IKK complex. Probably recruits IkappaBalpha/NFKBIA to the complex. May be involved in the organization of the cytomatrix at the nerve terminals active zone (CAZ) which regulates neurotransmitter release. May be involved in vesicle trafficking at the CAZ. May be involved in Rab-6 regulated endosomes to Golgi transport. The protein is ELKS/Rab6-interacting/CAST family member 1 (Erc1) of Rattus norvegicus (Rat).